The primary structure comprises 147 residues: MFSSIGWPEIFTVLILGLIIIGPERLPKVIEDVRAAIYAAKKAINNAKEELNGNLGAEFDEFREPINKIASIQRMGPKAVLTKALFDEDENFMDNFDPKKIMASGTEGEAYRERGINPQPAGDSASPQTPSNKESQPKAGFSWDDIT.

The chain crosses the membrane as a helical span at residues 2-22 (FSSIGWPEIFTVLILGLIIIG). Residues 96-147 (FDPKKIMASGTEGEAYRERGINPQPAGDSASPQTPSNKESQPKAGFSWDDIT) are disordered. A compositionally biased stretch (polar residues) spans 125–134 (ASPQTPSNKE).

This sequence belongs to the TatB family. As to quaternary structure, the Tat system comprises two distinct complexes: a TatABC complex, containing multiple copies of TatA, TatB and TatC subunits, and a separate TatA complex, containing only TatA subunits. Substrates initially bind to the TatABC complex, which probably triggers association of the separate TatA complex to form the active translocon.

Its subcellular location is the cell membrane. Its function is as follows. Part of the twin-arginine translocation (Tat) system that transports large folded proteins containing a characteristic twin-arginine motif in their signal peptide across membranes. Together with TatC, TatB is part of a receptor directly interacting with Tat signal peptides. TatB may form an oligomeric binding site that transiently accommodates folded Tat precursor proteins before their translocation. This chain is Sec-independent protein translocase protein TatB, found in Corynebacterium diphtheriae (strain ATCC 700971 / NCTC 13129 / Biotype gravis).